We begin with the raw amino-acid sequence, 406 residues long: Probable tRNA pseudouridine synthase D (406 aa).

Catalysis depends on Asp-77, which acts as the Nucleophile. Residues 150–371 (GFPNYFGIQR…PGGRRELLIK (222 aa)) form the TRUD domain.

The protein belongs to the pseudouridine synthase TruD family.

The catalysed reaction is uridine(13) in tRNA = pseudouridine(13) in tRNA. Could be responsible for synthesis of pseudouridine from uracil-13 in transfer RNAs. The chain is Probable tRNA pseudouridine synthase D from Pyrococcus abyssi (strain GE5 / Orsay).